A 111-amino-acid chain; its full sequence is Large ribosomal subunit protein uL22 (111 aa).

The protein belongs to the universal ribosomal protein uL22 family. Part of the 50S ribosomal subunit.

This protein binds specifically to 23S rRNA; its binding is stimulated by other ribosomal proteins, e.g. L4, L17, and L20. It is important during the early stages of 50S assembly. It makes multiple contacts with different domains of the 23S rRNA in the assembled 50S subunit and ribosome. In terms of biological role, the globular domain of the protein is located near the polypeptide exit tunnel on the outside of the subunit, while an extended beta-hairpin is found that lines the wall of the exit tunnel in the center of the 70S ribosome. This is Large ribosomal subunit protein uL22 from Geotalea daltonii (strain DSM 22248 / JCM 15807 / FRC-32) (Geobacter daltonii).